Here is a 278-residue protein sequence, read N- to C-terminus: Orotidine 5'-phosphate decarboxylase (278 aa).

Catalysis depends on Lys-95, which acts as the Proton donor.

Belongs to the OMP decarboxylase family. Type 2 subfamily.

It carries out the reaction orotidine 5'-phosphate + H(+) = UMP + CO2. The protein operates within pyrimidine metabolism; UMP biosynthesis via de novo pathway; UMP from orotate: step 2/2. This is Orotidine 5'-phosphate decarboxylase from Corynebacterium glutamicum (strain R).